The sequence spans 355 residues: Fructose-bisphosphate aldolase, cytoplasmic isozyme (355 aa).

Substrate contacts are provided by Arg52 and Lys142. The active-site Proton acceptor is Glu183. The active-site Schiff-base intermediate with dihydroxyacetone-P is the Lys225.

The protein belongs to the class I fructose-bisphosphate aldolase family.

It localises to the cytoplasm. The enzyme catalyses beta-D-fructose 1,6-bisphosphate = D-glyceraldehyde 3-phosphate + dihydroxyacetone phosphate. It participates in carbohydrate degradation; glycolysis; D-glyceraldehyde 3-phosphate and glycerone phosphate from D-glucose: step 4/4. The polypeptide is Fructose-bisphosphate aldolase, cytoplasmic isozyme (Zea mays (Maize)).